A 535-amino-acid polypeptide reads, in one-letter code: BAR/IMD domain-containing adapter protein 2 (535 aa).

In terms of domain architecture, IMD spans Met-1–Ser-250. Positions Met-1–Asn-251 form a coiled coil. A phosphoserine mark is found at Ser-262, Ser-324, Ser-326, and Ser-337. Residues Ser-308–Ala-370 are disordered. Over residues Gln-321–Ser-335 the composition is skewed to low complexity. Thr-341 bears the Phosphothreonine mark. Ser-347 is modified (phosphoserine). Over residues Thr-349–Met-368 the composition is skewed to polar residues. Residue Thr-361 is modified to Phosphothreonine. Phosphoserine occurs at positions 367, 385, 396, and 455. Residues Asn-375–Ser-438 enclose the SH3 domain. Residues His-445–Thr-486 form a disordered region. Composition is skewed to polar residues over residues Ser-447–Asn-458 and Gly-473–Thr-486.

Homodimer. Interacts with CDC42 and RAC1 that have been activated by GTP binding. Binds TIAM1. Interacts with ATN1, ADGRB1, DIAPH1, EPS8, SHANK1, SHANK2, SHANK3, WASF1 and WASF2. Interacts with ENAH after recruitment of CDC42. Post-translationally, phosphorylated on tyrosine residues by INSR in response to insulin treatment. In terms of tissue distribution, ubiquitous.

It is found in the cytoplasm. The protein localises to the membrane. It localises to the cell projection. Its subcellular location is the filopodium. The protein resides in the ruffle. It is found in the cytoskeleton. Functionally, adapter protein that links membrane-bound small G-proteins to cytoplasmic effector proteins. Necessary for CDC42-mediated reorganization of the actin cytoskeleton and for RAC1-mediated membrane ruffling. Involved in the regulation of the actin cytoskeleton by WASF family members and the Arp2/3 complex. Plays a role in neurite growth. Acts syngeristically with ENAH to promote filipodia formation. Plays a role in the reorganization of the actin cytoskeleton in response to bacterial infection. Participates in actin bundling when associated with EPS8, promoting filopodial protrusions. This chain is BAR/IMD domain-containing adapter protein 2 (Baiap2), found in Rattus norvegicus (Rat).